A 474-amino-acid chain; its full sequence is tRNA-2-methylthio-N(6)-dimethylallyladenosine synthase (474 aa).

Residues 3–120 (KKLYIKTFGC…LPQMISTRQI (118 aa)) enclose the MTTase N-terminal domain. [4Fe-4S] cluster-binding residues include Cys12, Cys49, Cys83, Cys157, Cys161, and Cys164. In terms of domain architecture, Radical SAM core spans 143 to 382 (RTEGVTAFVS…ELQAQAISVR (240 aa)). A TRAM domain is found at 381 to 444 (VRMVGTTQRV…SHTLRGENVR (64 aa)).

This sequence belongs to the methylthiotransferase family. MiaB subfamily. Monomer. Requires [4Fe-4S] cluster as cofactor.

The protein localises to the cytoplasm. It carries out the reaction N(6)-dimethylallyladenosine(37) in tRNA + (sulfur carrier)-SH + AH2 + 2 S-adenosyl-L-methionine = 2-methylsulfanyl-N(6)-dimethylallyladenosine(37) in tRNA + (sulfur carrier)-H + 5'-deoxyadenosine + L-methionine + A + S-adenosyl-L-homocysteine + 2 H(+). Catalyzes the methylthiolation of N6-(dimethylallyl)adenosine (i(6)A), leading to the formation of 2-methylthio-N6-(dimethylallyl)adenosine (ms(2)i(6)A) at position 37 in tRNAs that read codons beginning with uridine. This chain is tRNA-2-methylthio-N(6)-dimethylallyladenosine synthase, found in Nitrosospira multiformis (strain ATCC 25196 / NCIMB 11849 / C 71).